We begin with the raw amino-acid sequence, 575 residues long: MDDEDDFFNFLSEKPTDKEQSMLDDIFKMGNDTEDIFSRLNEFLSNDINLTPNNEETYTNRFNYDASVSLLDNVGRAASFNTYYRDGQEFRSHLHGQVMDDESEHIVASLEEECYKRGNKYFVSDFIYYDTETNSWTPKREELSKIGLEKDIKADVICVDKIKVWTGPRSEHLMSIQNATNSLSGYEKRDSMNKPPKGMFLHEVVKFGDLMGTMARYKRTDNTQSSHPFSENNRTNRTNVNMARGIHEFTLLNRIMMAHNIANNPYGGSSTLISRDSENNNSLTVDSVINSVINGITFKAEACKKEKKGEKKGFSLTQMASFGTHKSVVNFNEQDLEEIANMTEEELALAPLEGAEVQVHEACFNCSAVRGSRILPDMKRKGCQLLEDTKESITSLAVNNGKAKIMKMSNSLAWNSLNTLIDMMCWEANTHKMTREEEMEFFNTEITPALNGLHVSRDNYAQASSFTQQIPKNKFLAEPDIKSVSHKHKSVRTRNIFGQTNIKFKTAHRKVGELNNKKPMTGEKPPPKNKKSPKYKNNTFASQWARNMGIVRFLEFGPRVCRNRCDFREPTEEEI.

The tract at residues 507–536 is disordered; that stretch reads AHRKVGELNNKKPMTGEKPPPKNKKSPKYK.

This is an uncharacterized protein from Ostreid herpesvirus 1 (isolate France) (OsHV-1).